The primary structure comprises 254 residues: Imidazole glycerol phosphate synthase subunit HisF (254 aa).

Active-site residues include Asp-13 and Asp-132.

This sequence belongs to the HisA/HisF family. As to quaternary structure, heterodimer of HisH and HisF.

The protein localises to the cytoplasm. The catalysed reaction is 5-[(5-phospho-1-deoxy-D-ribulos-1-ylimino)methylamino]-1-(5-phospho-beta-D-ribosyl)imidazole-4-carboxamide + L-glutamine = D-erythro-1-(imidazol-4-yl)glycerol 3-phosphate + 5-amino-1-(5-phospho-beta-D-ribosyl)imidazole-4-carboxamide + L-glutamate + H(+). It functions in the pathway amino-acid biosynthesis; L-histidine biosynthesis; L-histidine from 5-phospho-alpha-D-ribose 1-diphosphate: step 5/9. In terms of biological role, IGPS catalyzes the conversion of PRFAR and glutamine to IGP, AICAR and glutamate. The HisF subunit catalyzes the cyclization activity that produces IGP and AICAR from PRFAR using the ammonia provided by the HisH subunit. The protein is Imidazole glycerol phosphate synthase subunit HisF of Nautilia profundicola (strain ATCC BAA-1463 / DSM 18972 / AmH).